The sequence spans 282 residues: Probable endonuclease 4 (282 aa).

His-69, His-109, Glu-144, Asp-178, His-181, His-215, Asp-228, His-230, and Glu-260 together coordinate Zn(2+).

This sequence belongs to the AP endonuclease 2 family. It depends on Zn(2+) as a cofactor.

The catalysed reaction is Endonucleolytic cleavage to 5'-phosphooligonucleotide end-products.. Functionally, endonuclease IV plays a role in DNA repair. It cleaves phosphodiester bonds at apurinic or apyrimidinic (AP) sites, generating a 3'-hydroxyl group and a 5'-terminal sugar phosphate. In Thermosipho africanus (strain TCF52B), this protein is Probable endonuclease 4.